Reading from the N-terminus, the 154-residue chain is Deoxyuridine 5'-triphosphate nucleotidohydrolase (154 aa).

Substrate is bound by residues 64-66, Asn77, 81-83, and Lys91; these read RSG and TVD.

It belongs to the dUTPase family. Homotrimer. It depends on Mg(2+) as a cofactor.

The catalysed reaction is dUTP + H2O = dUMP + diphosphate + H(+). It functions in the pathway pyrimidine metabolism; dUMP biosynthesis; dUMP from dCTP (dUTP route): step 2/2. This enzyme is involved in nucleotide metabolism: it produces dUMP, the immediate precursor of thymidine nucleotides and it decreases the intracellular concentration of dUTP so that uracil cannot be incorporated into DNA. This chain is Deoxyuridine 5'-triphosphate nucleotidohydrolase, found in Mycobacterium leprae (strain Br4923).